The primary structure comprises 402 residues: 1-deoxy-D-xylulose 5-phosphate reductoisomerase (402 aa).

Residues threonine 10, glycine 11, serine 12, isoleucine 13, asparagine 38, and asparagine 124 each coordinate NADPH. 1-deoxy-D-xylulose 5-phosphate is bound at residue lysine 125. NADPH is bound at residue glutamate 126. Residue aspartate 150 participates in Mn(2+) binding. 1-deoxy-D-xylulose 5-phosphate contacts are provided by serine 151, glutamate 152, serine 186, and histidine 209. Residue glutamate 152 coordinates Mn(2+). Glycine 215 is an NADPH binding site. 1-deoxy-D-xylulose 5-phosphate-binding residues include serine 222, asparagine 227, lysine 228, and glutamate 231. Glutamate 231 is a binding site for Mn(2+).

It belongs to the DXR family. It depends on Mg(2+) as a cofactor. Mn(2+) is required as a cofactor.

The catalysed reaction is 2-C-methyl-D-erythritol 4-phosphate + NADP(+) = 1-deoxy-D-xylulose 5-phosphate + NADPH + H(+). Its pathway is isoprenoid biosynthesis; isopentenyl diphosphate biosynthesis via DXP pathway; isopentenyl diphosphate from 1-deoxy-D-xylulose 5-phosphate: step 1/6. In terms of biological role, catalyzes the NADPH-dependent rearrangement and reduction of 1-deoxy-D-xylulose-5-phosphate (DXP) to 2-C-methyl-D-erythritol 4-phosphate (MEP). This is 1-deoxy-D-xylulose 5-phosphate reductoisomerase from Vibrio vulnificus (strain CMCP6).